We begin with the raw amino-acid sequence, 445 residues long: Type II methyltransferase M.Bpa9945I (445 aa).

The SAM-dependent MTase C5-type domain occupies 1-444 (MIVIDLFSGA…RAVKDVINGH (444 aa)). The active site involves Cys136.

The protein belongs to the class I-like SAM-binding methyltransferase superfamily. C5-methyltransferase family.

The protein localises to the cytoplasm. It carries out the reaction a 2'-deoxycytidine in DNA + S-adenosyl-L-methionine = a 5-methyl-2'-deoxycytidine in DNA + S-adenosyl-L-homocysteine + H(+). Component of antiviral defense system DISARM (defense island system associated with restriction-modification), composed of DrmE, DrmA, DrmB, DrmC and DrmMII. DISARM is probably a multi-gene restriction module, this subunit is a DNA methylase. Expression of DISARM in B.subtilis (strain BEST7003) confers resistance to phages Nf, phi29, phi105, phi3T, SPO1, SPR and SPP1. Protection is over 10(7)-fold against phi3T, 10(4)-10(5)-fold against Nf, phi29, phi105 and SPR, 100-fold against SPO1 and 10-fold against SPP1. DISARM does not interfere with phage adsorption, but instead interferes with (phi3T) DNA replication early in its cycle, preventing replication, circularization and lysogeny and probably causes phage DNA degradation (DNA is degraded in SPP1-infected cells). Expression of this methylase alone leads to highly methylated phage, however they are still susceptible to the DISARM system. Its function is as follows. A methylase, recognizes the double-stranded sequence 5'-CCWGG-3', methylates C-2 on both strands. Phage Nf does not have any 5'-CCWGG-3' motifs but is still targeted by the DISARM system. This chain is Type II methyltransferase M.Bpa9945I, found in Bacillus paralicheniformis (strain ATCC 9945a / NCIMB 11709 / CD-2).